A 1325-amino-acid polypeptide reads, in one-letter code: Protein suppressor of sable (1325 aa).

2 disordered regions span residues 1–36 and 74–326; these read MSVA…SKIQ and VCLQ…GGSN. Residues 9 to 30 show a composition bias toward acidic residues; it reads PLIDLEEDLEDGEIDDDEEDEQ. Positions 119–131 are enriched in polar residues; the sequence is RSSNQDTSDQSLE. Residues 138 to 327 are highly charged; it reads ATANPLLQST…GQEKMGGSNR (190 aa). Residues 149–158 are compositionally biased toward basic residues; it reads SSRRRKRKKE. The stretch at 149–179 forms a coiled coil; that stretch reads SSRRRKRKKEREREQKKDKEQQNRSRRDEND. The span at 159–178 shows a compositional bias: basic and acidic residues; it reads REREQKKDKEQQNRSRRDEN. Positions 236–246 are enriched in gly residues; it reads AGLGAGGGGGY. Residues 276 to 296 are a coiled coil; sequence NEKEHQRGVNNRKRRDRDRLE. 2 consecutive C3H1-type zinc fingers follow at residues 330–357 and 358–381; these read PRKL…HKEF and PCKY…HGEP. Residues 444 to 478 adopt a coiled-coil conformation; that stretch reads KRQDHQMQQQQQQLQHQQLQQQQEQQQTQQQAAAD. Residues 499–509 show a composition bias toward basic and acidic residues; the sequence is KRKSRWTEKMG. Disordered stretches follow at residues 499–535, 588–622, 639–695, 710–745, 780–835, 979–1058, 1143–1170, and 1295–1325; these read KRKS…LPPH, KAED…KSNG, FSGN…PSVF, SARQ…IGGG, AHSG…ALPP, DLET…GGSK, EPNG…GGGV, and RGGH…NRNI. Residue Ser524 is modified to Phosphoserine. Residues 594–606 show a composition bias toward polar residues; it reads PQTQAELESSTPP. Thr604 is modified (phosphothreonine). The span at 644 to 668 shows a compositional bias: acidic residues; the sequence is PLDDDRDDDEQLIIDDGNDSTAEED. Ser663 is subject to Phosphoserine. Position 664 is a phosphothreonine (Thr664). A compositionally biased stretch (polar residues) spans 710 to 726; that stretch reads SARQLLPASATSPNQEN. Low complexity predominate over residues 790–800; the sequence is SNENSNSNSHS. The span at 1003–1015 shows a compositional bias: pro residues; the sequence is SVPPPSMRVPPPN. The span at 1021 to 1033 shows a compositional bias: basic and acidic residues; that stretch reads PTVRTDPRRDPRR. The span at 1042–1056 shows a compositional bias: low complexity; the sequence is GASTANTTAPNASGG. Gly residues-rich tracts occupy residues 1149-1170 and 1295-1309; these read AALG…GGGV and RGGH…GNGN.

This sequence belongs to the suppressor of sable family. Interacts with Wdr82.

It is found in the nucleus. The protein localises to the chromosome. Its function is as follows. RNA-binding protein that suppresses transcription of some RNAs. Together with Wdr82, part of a transcription termination checkpoint that promotes transcription termination of RNAs and their subsequent degradation by the nuclear exosome. Promotes transcription termination of aberrant RNAs, transcripts from genes containing a transposon inserted at their very 5' end or RNAs from heat-shock-inducible repetitive element. Binds RNA preferentially at a sequence that resembles a cryptic 5'-splice site. The polypeptide is Protein suppressor of sable (Drosophila melanogaster (Fruit fly)).